The chain runs to 170 residues: Large ribosomal subunit protein uL16 (170 aa).

This sequence belongs to the universal ribosomal protein uL16 family.

The polypeptide is Large ribosomal subunit protein uL16 (Methanospirillum hungatei JF-1 (strain ATCC 27890 / DSM 864 / NBRC 100397 / JF-1)).